Consider the following 483-residue polypeptide: UDP-glucosyl transferase 73B2 (483 aa).

The Proton acceptor role is filled by His-22. His-22 serves as a coordination point for an anthocyanidin. Asp-133 functions as the Charge relay in the catalytic mechanism. UDP-alpha-D-glucose is bound by residues Ala-355, Gln-357, His-372, Trp-375, Asn-376, Ser-377, and Glu-380. An anthocyanidin is bound at residue Ala-395. Residues Glu-396 and Gln-397 each coordinate UDP-alpha-D-glucose.

Belongs to the UDP-glycosyltransferase family. As to expression, expressed in roots and flowers.

It catalyses the reaction a 7-O-hydroxy-flavonol + UDP-alpha-D-glucose = a flavonol 7-O-beta-D-glucoside + UDP + H(+). It participates in secondary metabolite biosynthesis; flavonoid biosynthesis. Catalyzes the glycosylation of flavonoids from UDP-glucose. Uses a wide range of flavonoid substrates including flavonols (quercetin, kaempferol, isorhamnetin, 3-OH 7,2',4'-MeO-flavone), flavones (luteolin, apigenin), flavanones (naringenin, hesperetin), flavanonols (taxifolin), isoflavones (genistein, daidzein), flavonol glycosides (quercitrin, isoquercitrin, rutin), and chalcones (isoliquiritigenin). Specific for the C-7 position, with a 20-fold lower activity for the C-3 position. The chain is UDP-glucosyl transferase 73B2 (UGT73B2) from Arabidopsis thaliana (Mouse-ear cress).